The primary structure comprises 103 residues: Small ribosomal subunit protein uS10 (103 aa).

Belongs to the universal ribosomal protein uS10 family. In terms of assembly, part of the 30S ribosomal subunit.

Its function is as follows. Involved in the binding of tRNA to the ribosomes. This is Small ribosomal subunit protein uS10 from Stutzerimonas stutzeri (strain A1501) (Pseudomonas stutzeri).